The primary structure comprises 43 residues: Large ribosomal subunit protein uL5 (43 aa).

This sequence belongs to the universal ribosomal protein uL5 family. In terms of assembly, part of the 50S ribosomal subunit; part of the 5S rRNA/L5/L18/L25 subcomplex. Contacts the 5S rRNA and the P site tRNA. Forms a bridge to the 30S subunit in the 70S ribosome.

This is one of the proteins that bind and probably mediate the attachment of the 5S RNA into the large ribosomal subunit, where it forms part of the central protuberance. In the 70S ribosome it contacts protein S13 of the 30S subunit (bridge B1b), connecting the 2 subunits; this bridge is implicated in subunit movement. Contacts the P site tRNA; the 5S rRNA and some of its associated proteins might help stabilize positioning of ribosome-bound tRNAs. This chain is Large ribosomal subunit protein uL5 (rplE), found in Proteus vulgaris.